Consider the following 325-residue polypeptide: Melanocortin receptor 5 (325 aa).

The Extracellular segment spans residues 1–37 (MNSSFHLHFLDLGLNTTDGNLSGLSVQNASSLCEDMG). Residues Asn-2, Asn-15, Asn-20, and Asn-28 are each glycosylated (N-linked (GlcNAc...) asparagine). A helical membrane pass occupies residues 38–61 (IAVEVFLALGLISLLENILVIGAI). The Cytoplasmic segment spans residues 62-73 (VRNRNLHTPMYF). The chain crosses the membrane as a helical span at residues 74-97 (FVGSLAVADMLVSLSNSWETITIY). Residues 98-114 (LLTNKHLVMADASVRHL) are Extracellular-facing. The chain crosses the membrane as a helical span at residues 115–138 (DNVFDSMICISVVASMCSLLAIAV). Residues 139 to 155 (DRYVTIFCALRYQRIMT) lie on the Cytoplasmic side of the membrane. The helical transmembrane segment at 156–179 (GRRSGAIIGGIWAFCASCGTVFIV) threads the bilayer. Topologically, residues 180 to 186 (YYESTYV) are extracellular. A helical transmembrane segment spans residues 187-211 (VICLIAMFLTMLLLMASLYTHMFLL). Over 212 to 239 (ARTHIRRIATLPGHSSVRQRTGVKGAIT) the chain is Cytoplasmic. The chain crosses the membrane as a helical span at residues 240 to 265 (LAMLLGVFIVCWAPFFLHLILMISCP). The Extracellular portion of the chain corresponds to 266-273 (HNLYCSCF). Residues 274–297 (MSHFNMYLILIMCNSVIDPLIYAF) form a helical membrane-spanning segment. Topologically, residues 298–325 (RSQEMRKTFKEIVCFQSFRTPCRFPSRY) are cytoplasmic. A lipid anchor (S-palmitoyl cysteine) is attached at Cys-311.

This sequence belongs to the G-protein coupled receptor 1 family.

It localises to the cell membrane. Its function is as follows. Receptor for MSH (alpha, beta and gamma) and ACTH. The activity of this receptor is mediated by G proteins which activate adenylate cyclase. This receptor is a possible mediator of the immunomodulation properties of melanocortins. This chain is Melanocortin receptor 5 (MC5R), found in Bos taurus (Bovine).